Reading from the N-terminus, the 110-residue chain is Integration host factor subunit alpha (110 aa).

It belongs to the bacterial histone-like protein family. In terms of assembly, heterodimer of an alpha and a beta chain.

Functionally, this protein is one of the two subunits of integration host factor, a specific DNA-binding protein that functions in genetic recombination as well as in transcriptional and translational control. This is Integration host factor subunit alpha from Nitrobacter hamburgensis (strain DSM 10229 / NCIMB 13809 / X14).